The sequence spans 385 residues: 8-amino-7-oxononanoate synthase (385 aa).

Residue Arg-21 coordinates substrate. 108–109 (GF) lines the pyridoxal 5'-phosphate pocket. Position 133 (His-133) interacts with substrate. Pyridoxal 5'-phosphate is bound by residues Ser-179, His-207, and Thr-233. Lys-236 carries the post-translational modification N6-(pyridoxal phosphate)lysine. Residue Thr-352 coordinates substrate.

The protein belongs to the class-II pyridoxal-phosphate-dependent aminotransferase family. BioF subfamily. As to quaternary structure, homodimer. Requires pyridoxal 5'-phosphate as cofactor.

The catalysed reaction is 6-carboxyhexanoyl-[ACP] + L-alanine + H(+) = (8S)-8-amino-7-oxononanoate + holo-[ACP] + CO2. It functions in the pathway cofactor biosynthesis; biotin biosynthesis. Its function is as follows. Catalyzes the decarboxylative condensation of pimeloyl-[acyl-carrier protein] and L-alanine to produce 8-amino-7-oxononanoate (AON), [acyl-carrier protein], and carbon dioxide. The sequence is that of 8-amino-7-oxononanoate synthase from Salmonella choleraesuis (strain SC-B67).